Reading from the N-terminus, the 161-residue chain is PHD finger-containing protein 4 (161 aa).

A PHD-type zinc finger spans residues 30-80 (KKPCEVCGSNANDHAIMTCFLCRDTREHIYCARVHLRSVPRMWICEECRMN). Zn(2+)-binding residues include cysteine 33, cysteine 36, cysteine 48, cysteine 51, histidine 57, cysteine 60, cysteine 74, and cysteine 77. Residues 114–132 (TMTSSDSGNQISATHQQPP) show a composition bias toward polar residues. Residues 114-161 (TMTSSDSGNQISATHQQPPQAHASPVAVPMDTSSSDNQQPPSDSESAI) are disordered. Over residues 146 to 161 (SSSDNQQPPSDSESAI) the composition is skewed to low complexity.

Interacts directly with AIPP3/BDT1.

In terms of biological role, together with AIPP3/BDT1, cooperates to form a BAH-PHD bivalent histone reader complex able to read histone H3 lysine 27 trimethylation (H3K27me3) histone marks in order to regulate transcription, especially to prevent early flowering; promotes AIPP3/BDT1 binding to H3K27me3. The polypeptide is PHD finger-containing protein 4 (Arabidopsis thaliana (Mouse-ear cress)).